A 359-amino-acid polypeptide reads, in one-letter code: MNKERYIGIMSGTSLDGVDVVLCEIDKKSCLLKASVEYPFPDDLKKEILSMINGKCTLAQVGSVDVRLGILFSDAVNALLEIEKIDPKSIKAIGSHGQTLWHEPVGKYPFSMQLGDPSAIAVRTGIKVVADFRQKDMALGGQGAPFAPAFHAFLFGGTDASVSILNIGGMANITVLGKTLLGYDTGPGNVLMDMWVAEHKDVTYDRNGEWARSGEVIYPLLEAMLEDPYFSQPHPKSTGREKFNEAWLQKHLNAQHSTLNAHDVQRTLLELTAVSISNEVLKFNQDILLLCGGGAKNAFLVERLGTLMPNIQIGIANDADNIEAMTFAWLAYKRLHNEHVDLKDVTGARQNAILGGVYV.

12–19 provides a ligand contact to ATP; that stretch reads GTSLDGVD.

Belongs to the anhydro-N-acetylmuramic acid kinase family.

It carries out the reaction 1,6-anhydro-N-acetyl-beta-muramate + ATP + H2O = N-acetyl-D-muramate 6-phosphate + ADP + H(+). The protein operates within amino-sugar metabolism; 1,6-anhydro-N-acetylmuramate degradation. It participates in cell wall biogenesis; peptidoglycan recycling. Functionally, catalyzes the specific phosphorylation of 1,6-anhydro-N-acetylmuramic acid (anhMurNAc) with the simultaneous cleavage of the 1,6-anhydro ring, generating MurNAc-6-P. Is required for the utilization of anhMurNAc either imported from the medium or derived from its own cell wall murein, and thus plays a role in cell wall recycling. This Sulfurovum sp. (strain NBC37-1) protein is Anhydro-N-acetylmuramic acid kinase.